A 486-amino-acid polypeptide reads, in one-letter code: UDP-N-acetylmuramate--L-alanine ligase (486 aa).

Residue 123-129 (GTHGKTT) participates in ATP binding.

It belongs to the MurCDEF family.

It is found in the cytoplasm. It carries out the reaction UDP-N-acetyl-alpha-D-muramate + L-alanine + ATP = UDP-N-acetyl-alpha-D-muramoyl-L-alanine + ADP + phosphate + H(+). It functions in the pathway cell wall biogenesis; peptidoglycan biosynthesis. Its function is as follows. Cell wall formation. This chain is UDP-N-acetylmuramate--L-alanine ligase, found in Pseudomonas fluorescens (strain Pf0-1).